We begin with the raw amino-acid sequence, 70 residues long: Large ribosomal subunit protein eL43 (70 aa).

Positions 36, 39, 55, and 58 each coordinate Zn(2+). The C4-type zinc-finger motif lies at 36-58; it reads CPYCKTTGKVIRLASGIWYCKKC.

The protein belongs to the eukaryotic ribosomal protein eL43 family. Putative zinc-binding subfamily. Part of the 50S ribosomal subunit. Zn(2+) is required as a cofactor.

Functionally, binds to the 23S rRNA. The chain is Large ribosomal subunit protein eL43 from Saccharolobus solfataricus (strain ATCC 35092 / DSM 1617 / JCM 11322 / P2) (Sulfolobus solfataricus).